A 191-amino-acid polypeptide reads, in one-letter code: Prostaglandin-H2 D-isomerase (191 aa).

An N-terminal signal peptide occupies residues 1–24 (MGALCTLWLGLVLLGVLGALQTSA). Gln-25 carries the post-translational modification Pyrrolidone carboxylic acid. N-linked (GlcNAc...) asparagine glycosylation is present at Asn-51. Cys-65 functions as the Nucleophile in the catalytic mechanism. An N-linked (GlcNAc...) asparagine glycan is attached at Asn-78. A disulfide bond links Cys-89 and Cys-186.

This sequence belongs to the calycin superfamily. Lipocalin family. As to quaternary structure, monomer. Post-translationally, N- and O-glycosylated. Both N-glycosylation recognition sites are almost quantitatively occupied by N-glycans of the biantennary complex type, with a considerable proportion of structures bearing a bisecting GlcNAc. N-glycan at Asn-78: dHex1Hex5HexNAc4. Agalacto structure as well as sialylated and nonsialylated oligosaccharides bearing alpha2-3- and/or alpha2-6-linked NeuNAc are present.

The protein localises to the rough endoplasmic reticulum. The protein resides in the nucleus membrane. It is found in the golgi apparatus. Its subcellular location is the cytoplasm. It localises to the perinuclear region. The protein localises to the secreted. The catalysed reaction is prostaglandin H2 = prostaglandin D2. Catalyzes the conversion of PGH2 to PGD2, a prostaglandin involved in smooth muscle contraction/relaxation and a potent inhibitor of platelet aggregation. Involved in a variety of CNS functions, such as sedation, NREM sleep and PGE2-induced allodynia, and may have an anti-apoptotic role in oligodendrocytes. Binds small non-substrate lipophilic molecules, including biliverdin, bilirubin, retinal, retinoic acid and thyroid hormone, and may act as a scavenger for harmful hydrophobic molecules and as a secretory retinoid and thyroid hormone transporter. Possibly involved in development and maintenance of the blood-brain, blood-retina, blood-aqueous humor and blood-testis barrier. It is likely to play important roles in both maturation and maintenance of the central nervous system and male reproductive system. Involved in PLA2G3-dependent maturation of mast cells. PLA2G3 is secreted by immature mast cells and acts on nearby fibroblasts upstream to PTDGS to synthesize PGD2, which in turn promotes mast cell maturation and degranulation via PTGDR. This is Prostaglandin-H2 D-isomerase (PTGDS) from Canis lupus familiaris (Dog).